Consider the following 452-residue polypeptide: RNA polymerase II-associated protein rba50 (452 aa).

Disordered regions lie at residues 60 to 83, 125 to 202, and 223 to 261; these read LRKN…IDEE, EREL…QTKR, and PIKG…PLEF. Positions 125–135 are enriched in basic and acidic residues; that stretch reads ERELAQRKDRS. Over residues 136-154 the composition is skewed to polar residues; that stretch reads SQVNTPDLSQRPSDDSFLS. Over residues 156-165 the composition is skewed to basic and acidic residues; it reads EKLRSSEKLN. Residues 170–191 show a composition bias toward low complexity; the sequence is SVLSSEAVDSSSGSPSPPMALS.

It belongs to the RPAP1 family. As to quaternary structure, interacts with RNA polymerase II.

The protein localises to the cytoplasm. The protein resides in the nucleus. Its function is as follows. Forms an interface between the RNA polymerase II enzyme and chaperone/scaffolding proteins, suggesting that it is required to connect RNA polymerase II to regulators of protein complex formation. This Schizosaccharomyces pombe (strain 972 / ATCC 24843) (Fission yeast) protein is RNA polymerase II-associated protein rba50 (rba50).